We begin with the raw amino-acid sequence, 281 residues long: Proteasome subunit beta (281 aa).

Positions 1–53 are cleaved as a propeptide — removed in mature form; by autocatalysis; that stretch reads MEANTRSTGRLPAAFLTPGSSSFMDFLGEHQPEMLPGNRQLPPVQGVIEAPHG. Catalysis depends on Thr-54, which acts as the Nucleophile.

Belongs to the peptidase T1B family. The 20S proteasome core is composed of 14 alpha and 14 beta subunits that assemble into four stacked heptameric rings, resulting in a barrel-shaped structure. The two inner rings, each composed of seven catalytic beta subunits, are sandwiched by two outer rings, each composed of seven alpha subunits. The catalytic chamber with the active sites is on the inside of the barrel. Has probably a gated structure, the ends of the cylinder being occluded by the N-termini of the alpha-subunits. Is likely capped by the proteasome-associated ATPase, ARC.

Its subcellular location is the cytoplasm. It catalyses the reaction Cleavage of peptide bonds with very broad specificity.. The protein operates within protein degradation; proteasomal Pup-dependent pathway. The formation of the proteasomal ATPase ARC-20S proteasome complex, likely via the docking of the C-termini of ARC into the intersubunit pockets in the alpha-rings, may trigger opening of the gate for substrate entry. Interconversion between the open-gate and close-gate conformations leads to a dynamic regulation of the 20S proteasome proteolysis activity. Peptidolytic activity is completely inhibited by lactacystin, and to a lesser extent, by N-acetyl-Leu-Leu-norleucinal (Ac-LLnL) and benzoyloxycarbonyl-Leu-Leu-Leu-vinylsulfone (Z-LLL-VS) in vitro. Component of the proteasome core, a large protease complex with broad specificity involved in protein degradation. The S.coelicolor proteasome is able to cleave oligopeptides after hydrophobic residues, but not after basic or acidic residues, thus displaying chymotrypsin-like activity but not trypsin-like activity. In Streptomyces coelicolor (strain ATCC BAA-471 / A3(2) / M145), this protein is Proteasome subunit beta.